The following is a 119-amino-acid chain: NLYQFKNMIQCTVPNRSWWHFADYGCFCGYGGSGTPVDELDRCCQTHDNCYSEAEKLSGCKPYIKTYSYDCSQGKLTCSGNDDKCAAFVCNCDRVAAICFAGAPYIDDNYNVDLNERCQ.

7 disulfides stabilise this stretch: Cys-11–Cys-71, Cys-26–Cys-118, Cys-28–Cys-44, Cys-43–Cys-99, Cys-50–Cys-92, Cys-60–Cys-85, and Cys-78–Cys-90. 3 residues coordinate Ca(2+): Phe-27, Gly-29, and Gly-31. Residue His-47 is part of the active site. Asp-48 contacts Ca(2+). Asp-93 is a catalytic residue.

The protein belongs to the phospholipase A2 family. Group I subfamily. D49 sub-subfamily. The cofactor is Ca(2+). Expressed by the venom gland.

The protein localises to the secreted. The enzyme catalyses a 1,2-diacyl-sn-glycero-3-phosphocholine + H2O = a 1-acyl-sn-glycero-3-phosphocholine + a fatty acid + H(+). Its function is as follows. PLA2 catalyzes the calcium-dependent hydrolysis of the 2-acyl groups in 3-sn-phosphoglycerides. This chain is Acidic phospholipase A2 CM-II, found in Aspidelaps scutatus (Shield-nose snake).